A 148-amino-acid polypeptide reads, in one-letter code: Large ribosomal subunit protein uL13 (148 aa).

Belongs to the universal ribosomal protein uL13 family. As to quaternary structure, part of the 50S ribosomal subunit.

Its function is as follows. This protein is one of the early assembly proteins of the 50S ribosomal subunit, although it is not seen to bind rRNA by itself. It is important during the early stages of 50S assembly. This chain is Large ribosomal subunit protein uL13, found in Sulfolobus acidocaldarius (strain ATCC 33909 / DSM 639 / JCM 8929 / NBRC 15157 / NCIMB 11770).